The primary structure comprises 279 residues: Elongation factor Ts (279 aa).

The interval 80-83 (TDFV) is involved in Mg(2+) ion dislocation from EF-Tu.

It belongs to the EF-Ts family.

It localises to the cytoplasm. In terms of biological role, associates with the EF-Tu.GDP complex and induces the exchange of GDP to GTP. It remains bound to the aminoacyl-tRNA.EF-Tu.GTP complex up to the GTP hydrolysis stage on the ribosome. This Borrelia garinii subsp. bavariensis (strain ATCC BAA-2496 / DSM 23469 / PBi) (Borreliella bavariensis) protein is Elongation factor Ts.